Reading from the N-terminus, the 84-residue chain is Large ribosomal subunit protein bL27 (84 aa).

This sequence belongs to the bacterial ribosomal protein bL27 family.

The chain is Large ribosomal subunit protein bL27 from Karelsulcia muelleri (strain GWSS) (Sulcia muelleri).